We begin with the raw amino-acid sequence, 137 residues long: MLVPKRVKHRREFRGKMRGEAKGGKEVSFGEYGLQATTSHWITNRQIEAARIAMTRYMKRGGKVWIKIFPHKSYTAKAIGVRMGSGKGAPEGWVAPVKRGKVMFEIAGVSEEVAREALRLASHKLPVKSKFVKREAE.

The protein belongs to the universal ribosomal protein uL16 family. Part of the 50S ribosomal subunit.

Functionally, binds 23S rRNA and is also seen to make contacts with the A and possibly P site tRNAs. The chain is Large ribosomal subunit protein uL16 from Streptococcus thermophilus (strain ATCC BAA-491 / LMD-9).